The chain runs to 205 residues: Cytochrome c oxidase subunit 2 (205 aa).

The Cu cation site is built by His115, Cys150, Glu152, Cys154, His158, and Met161. Glu152 contacts Mg(2+).

It belongs to the cytochrome c oxidase subunit 2 family. In terms of assembly, component of the cytochrome c oxidase (complex IV, CIV), a multisubunit enzyme composed of a catalytic core of 3 subunits and several supernumerary subunits. The complex exists as a monomer or a dimer and forms supercomplexes (SCs) in the inner mitochondrial membrane with ubiquinol-cytochrome c oxidoreductase (cytochrome b-c1 complex, complex III, CIII). Requires Cu cation as cofactor.

It localises to the mitochondrion inner membrane. It catalyses the reaction 4 Fe(II)-[cytochrome c] + O2 + 8 H(+)(in) = 4 Fe(III)-[cytochrome c] + 2 H2O + 4 H(+)(out). Its function is as follows. Component of the cytochrome c oxidase, the last enzyme in the mitochondrial electron transport chain which drives oxidative phosphorylation. The respiratory chain contains 3 multisubunit complexes succinate dehydrogenase (complex II, CII), ubiquinol-cytochrome c oxidoreductase (cytochrome b-c1 complex, complex III, CIII) and cytochrome c oxidase (complex IV, CIV), that cooperate to transfer electrons derived from NADH and succinate to molecular oxygen, creating an electrochemical gradient over the inner membrane that drives transmembrane transport and the ATP synthase. Cytochrome c oxidase is the component of the respiratory chain that catalyzes the reduction of oxygen to water. Electrons originating from reduced cytochrome c in the intermembrane space (IMS) are transferred via the dinuclear copper A center (CU(A)) of subunit 2 and heme A of subunit 1 to the active site in subunit 1, a binuclear center (BNC) formed by heme A3 and copper B (CU(B)). The BNC reduces molecular oxygen to 2 water molecules using 4 electrons from cytochrome c in the IMS and 4 protons from the mitochondrial matrix. This Paramecium tetraurelia protein is Cytochrome c oxidase subunit 2 (COII).